Consider the following 381-residue polypeptide: uncharacterized protein (381 aa).

The next 9 helical transmembrane spans lie at 59–79 (LITL…LYYM), 84–104 (GVAP…YQTM), 147–167 (VGVN…FFMA), 190–210 (SMMA…FNTI), 222–242 (LVLL…TFSI), 250–270 (ILTN…SIYW), 284–304 (HYFM…LILA), 311–331 (LSPI…IYKF), and 344–364 (VYFF…VTSL).

This sequence belongs to the CDP-alcohol phosphatidyltransferase class-I family.

Its subcellular location is the membrane. This is an uncharacterized protein from Dictyostelium discoideum (Social amoeba).